The sequence spans 628 residues: MISSVCVSSYRGRKSGNKPPSKTCLKEEMAKGEASEKIIINVGGTRHETYRSTLRTLPGTRLAWLADPDGGGRPESDGGGAGSSGSSGGGGGGGGCEFFFDRHPGVFAYVLNYYRTGKLHCPADVCGPLFEEELTFWGIDETDVEPCCWMTYRQHRDAEEALDIFESPDGGGGGAGPGDEAGDDERELALQRLGPHEGGSGPGAGSGGCRGWQPRMWALFEDPYSSRAARVVAFASLFFILVSITTFCLETHEAFNIDRNVTEIHRVGNITSVRFRREVETEPILTYIEGVCVMWFTLEFLVRIVCCPDTLDFVKNLLNIIDFVAILPFYLEVGLSGLSSKAARDVLGFLRVVRFVRILRIFKLTRHFVGLRVLGHTLRASTNEFLLLIIFLALGVLIFATMIYYAERIGARPSDPRGNDHTDFKNIPIGFWWAVVTMTTLGYGDMYPKTWSGMLVGALCALAGVLTIAMPVPVIVNNFGMYYSLAMAKQKLPKKRKKHVPRPPQLESPIYCKSEETSPRDSTYSDTSPPAREEGVVERKRADSKQNGDANAVLSDEEGAGLTQPLALAPTPEERRALRRSGTRDRNKKAAACFLLSAGDYACADGSVRKEGNVEPKACVPVSHTCAL.

Disordered regions lie at residues 1 to 24 (MISSVCVSSYRGRKSGNKPPSKTC) and 62 to 88 (LAWLADPDGGGRPESDGGGAGSSGSSG). Residues 1-28 (MISSVCVSSYRGRKSGNKPPSKTCLKEE) form an inactivation gate region. Over 1-230 (MISSVCVSSY…EDPYSSRAAR (230 aa)) the chain is Cytoplasmic. Phosphoserine occurs at positions 8, 9, 15, and 21. Gly residues predominate over residues 77-88 (DGGGAGSSGSSG). His-120, Cys-126, Cys-147, and Cys-148 together coordinate Zn(2+). Residues 231 to 251 (VVAFASLFFILVSITTFCLET) traverse the membrane as a helical segment. Residues Asn-260 and Asn-269 are each glycosylated (N-linked (GlcNAc...) asparagine). Residues 282–302 (EPILTYIEGVCVMWFTLEFLV) traverse the membrane as a helical segment. Over 303–316 (RIVCCPDTLDFVKN) the chain is Cytoplasmic. A helical transmembrane segment spans residues 317–337 (LLNIIDFVAILPFYLEVGLSG). Residues 349–368 (FLRVVRFVRILRIFKLTRHF) traverse the membrane as a helical; Voltage-sensor segment. Over 369–384 (VGLRVLGHTLRASTNE) the chain is Cytoplasmic. Residues 385 to 405 (FLLLIIFLALGVLIFATMIYY) form a helical membrane-spanning segment. Thr-440, Leu-441, Gly-442, and Tyr-443 together coordinate K(+). A Selectivity filter motif is present at residues 440-445 (TLGYGD). The helical transmembrane segment at 456-476 (VGALCALAGVLTIAMPVPVIV) threads the bilayer. Residues 477–628 (NNFGMYYSLA…CVPVSHTCAL (152 aa)) are Cytoplasmic-facing. The interval 493–584 (PKKRKKHVPR…RRALRRSGTR (92 aa)) is disordered. The segment covering 531-546 (AREEGVVERKRADSKQ) has biased composition (basic and acidic residues).

This sequence belongs to the potassium channel family. C (Shaw) (TC 1.A.1.2) subfamily. Kv3.4/KCNC4 sub-subfamily. Homotetramer. Heterotetramer of potassium channel proteins. Post-translationally, phosphorylation of serine residues in the inactivation gate inhibits rapid channel closure.

The protein resides in the membrane. The catalysed reaction is K(+)(in) = K(+)(out). In terms of biological role, voltage-gated potassium channel that opens in response to the voltage difference across the membrane, forming a potassium-selective channel through which potassium ions pass in accordance with their electrochemical gradient. The channel displays rapid activation and inactivation kinetics. This Mus musculus (Mouse) protein is Voltage-gated potassium channel KCNC4.